Reading from the N-terminus, the 376-residue chain is Chaperone protein DnaJ (376 aa).

The region spanning 5 to 70 is the J domain; the sequence is DYYEVLGVAR…EKRARYDRFG (66 aa). The segment at 137 to 215 adopts a CR-type zinc-finger fold; the sequence is GDEVTLRLPK…CKGSGQTQQV (79 aa). Residues Cys-150, Cys-153, Cys-167, Cys-170, Cys-189, Cys-192, Cys-203, and Cys-206 each contribute to the Zn(2+) site. 4 CXXCXGXG motif repeats span residues 150–157, 167–174, 189–196, and 203–210; these read CDECGGSG, CRHCGGAG, CPVCRGEG, and CPKCKGSG.

Belongs to the DnaJ family. Homodimer. The cofactor is Zn(2+).

The protein localises to the cytoplasm. Participates actively in the response to hyperosmotic and heat shock by preventing the aggregation of stress-denatured proteins and by disaggregating proteins, also in an autonomous, DnaK-independent fashion. Unfolded proteins bind initially to DnaJ; upon interaction with the DnaJ-bound protein, DnaK hydrolyzes its bound ATP, resulting in the formation of a stable complex. GrpE releases ADP from DnaK; ATP binding to DnaK triggers the release of the substrate protein, thus completing the reaction cycle. Several rounds of ATP-dependent interactions between DnaJ, DnaK and GrpE are required for fully efficient folding. Also involved, together with DnaK and GrpE, in the DNA replication of plasmids through activation of initiation proteins. This Nitratidesulfovibrio vulgaris (strain ATCC 29579 / DSM 644 / CCUG 34227 / NCIMB 8303 / VKM B-1760 / Hildenborough) (Desulfovibrio vulgaris) protein is Chaperone protein DnaJ.